The primary structure comprises 153 residues: D-aminoacyl-tRNA deacylase (153 aa).

A Gly-cisPro motif, important for rejection of L-amino acids motif is present at residues 142 to 143; it reads GP.

Belongs to the DTD family. In terms of assembly, homodimer.

Its subcellular location is the cytoplasm. The enzyme catalyses glycyl-tRNA(Ala) + H2O = tRNA(Ala) + glycine + H(+). It catalyses the reaction a D-aminoacyl-tRNA + H2O = a tRNA + a D-alpha-amino acid + H(+). An aminoacyl-tRNA editing enzyme that deacylates mischarged D-aminoacyl-tRNAs. Also deacylates mischarged glycyl-tRNA(Ala), protecting cells against glycine mischarging by AlaRS. Acts via tRNA-based rather than protein-based catalysis; rejects L-amino acids rather than detecting D-amino acids in the active site. By recycling D-aminoacyl-tRNA to D-amino acids and free tRNA molecules, this enzyme counteracts the toxicity associated with the formation of D-aminoacyl-tRNA entities in vivo and helps enforce protein L-homochirality. The chain is D-aminoacyl-tRNA deacylase from Cupriavidus taiwanensis (strain DSM 17343 / BCRC 17206 / CCUG 44338 / CIP 107171 / LMG 19424 / R1) (Ralstonia taiwanensis (strain LMG 19424)).